Reading from the N-terminus, the 205-residue chain is Spermatogenesis-associated protein 24 (205 aa).

Residues 17–166 (LAFDQLRDVI…QQRQSFRNHM (150 aa)) adopt a coiled-coil conformation. A required for interaction with CBX5 and TBPL1 region spans residues 138-185 (EDILNGKENEIKELQQVISQQRQSFRNHMSDFRIQKQQETYMAQVLDQ). Residues 182 to 205 (VLDQKHKKTSGTRRARSRQCSREK) form a disordered region. The span at 186–205 (KHKKTSGTRRARSRQCSREK) shows a compositional bias: basic residues.

The protein belongs to the SPATA24 family. As to quaternary structure, homodimer. Interacts with CBX3, CBX5, GMNN, GTF2B, TBPL1 and the polycomb proteins PHCF2, RNF2 and SCMH1 but not with CBX1 or PCGF2. As to expression, highly expressed in the testis and is mainly localized in the spermatids. Also expressed in the lung, heart, spleen and epididymis.

The protein localises to the cytoplasm. Its subcellular location is the nucleus. It is found in the nucleolus. It localises to the nucleoplasm. In terms of biological role, binds DNA with high affinity but does not bind to TATA boxes. Synergises with GMNN and TBP in activation of TATA box-containing promoters and with GMNN and TBPL1 in activation of the NF1 TATA-less promoter. May play a role in cytoplasm movement and removal during spermiogenesis. In Rattus norvegicus (Rat), this protein is Spermatogenesis-associated protein 24 (Spata24).